The sequence spans 199 residues: NAD(P)H dehydrogenase (quinone) (199 aa).

The 187-residue stretch at 4–190 (ILVLYYSMYG…AIARFQGEHV (187 aa)) folds into the Flavodoxin-like domain. Residues 10–15 (SMYGHI) and 79–81 (TRF) each bind FMN. Tyr12 contacts NAD(+). Trp99 contributes to the substrate binding site. FMN is bound by residues 114–119 (STGTGG) and His134.

It belongs to the WrbA family. FMN serves as cofactor.

It catalyses the reaction a quinone + NADH + H(+) = a quinol + NAD(+). The catalysed reaction is a quinone + NADPH + H(+) = a quinol + NADP(+). The sequence is that of NAD(P)H dehydrogenase (quinone) from Yersinia pseudotuberculosis serotype O:1b (strain IP 31758).